Reading from the N-terminus, the 364-residue chain is GDP-fucose transporter 1 (364 aa).

Transmembrane regions (helical) follow at residues 34 to 56, 76 to 98, 111 to 130, 140 to 162, 167 to 185, 195 to 214, 227 to 249, and 264 to 286; these read FVLR…ISMV, VTFY…ATCC, LKVA…MITF, VAFY…YLLL, SFYA…WLGV, SWTG…LNAI, IWRL…LLAL, and AHFW…VTGL. Residues 345 to 364 are disordered; sequence MKKTQEEPHPRENEKSNMEV.

It belongs to the TPT transporter family. SLC35C subfamily.

It localises to the golgi apparatus membrane. The enzyme catalyses GMP(out) + GDP-beta-L-fucose(in) = GMP(in) + GDP-beta-L-fucose(out). Antiporter specific for GDP-l-fucose and depending on the concomitant reverse transport of GMP. Involved in GDP-fucose import from the cytoplasm into the Golgi lumen. The protein is GDP-fucose transporter 1 (SLC35C1) of Bos taurus (Bovine).